A 365-amino-acid polypeptide reads, in one-letter code: Succinyl-diaminopimelate desuccinylase (365 aa).

His64 provides a ligand contact to Zn(2+). Asp66 is a catalytic residue. Residue Asp95 participates in Zn(2+) binding. Glu125 (proton acceptor) is an active-site residue. Zn(2+) contacts are provided by Glu126, Glu154, and His339.

This sequence belongs to the peptidase M20A family. DapE subfamily. Homodimer. Zn(2+) is required as a cofactor. Co(2+) serves as cofactor.

The enzyme catalyses N-succinyl-(2S,6S)-2,6-diaminopimelate + H2O = (2S,6S)-2,6-diaminopimelate + succinate. It participates in amino-acid biosynthesis; L-lysine biosynthesis via DAP pathway; LL-2,6-diaminopimelate from (S)-tetrahydrodipicolinate (succinylase route): step 3/3. Catalyzes the hydrolysis of N-succinyl-L,L-diaminopimelic acid (SDAP), forming succinate and LL-2,6-diaminopimelate (DAP), an intermediate involved in the bacterial biosynthesis of lysine and meso-diaminopimelic acid, an essential component of bacterial cell walls. This Sulfurimonas denitrificans (strain ATCC 33889 / DSM 1251) (Thiomicrospira denitrificans (strain ATCC 33889 / DSM 1251)) protein is Succinyl-diaminopimelate desuccinylase.